The sequence spans 205 residues: Probable molybdenum cofactor guanylyltransferase (205 aa).

GTP is bound by residues 10 to 12 (LAG), K22, D69, and D100. Position 100 (D100) interacts with Mg(2+).

Belongs to the MobA family. The cofactor is Mg(2+).

It is found in the cytoplasm. The enzyme catalyses Mo-molybdopterin + GTP + H(+) = Mo-molybdopterin guanine dinucleotide + diphosphate. Its function is as follows. Transfers a GMP moiety from GTP to Mo-molybdopterin (Mo-MPT) cofactor (Moco or molybdenum cofactor) to form Mo-molybdopterin guanine dinucleotide (Mo-MGD) cofactor. The chain is Probable molybdenum cofactor guanylyltransferase from Natranaerobius thermophilus (strain ATCC BAA-1301 / DSM 18059 / JW/NM-WN-LF).